A 502-amino-acid chain; its full sequence is Glycerol kinase (502 aa).

Threonine 14 is a binding site for ADP. 3 residues coordinate ATP: threonine 14, threonine 15, and serine 16. Residue threonine 14 participates in sn-glycerol 3-phosphate binding. Position 18 (arginine 18) interacts with ADP. Sn-glycerol 3-phosphate-binding residues include arginine 84, glutamate 85, tyrosine 136, and aspartate 246. Glycerol-binding residues include arginine 84, glutamate 85, tyrosine 136, aspartate 246, and glutamine 247. Residues threonine 268 and glycine 311 each contribute to the ADP site. ATP contacts are provided by threonine 268, glycine 311, glutamine 315, and glycine 412. Positions 412 and 416 each coordinate ADP.

This sequence belongs to the FGGY kinase family. In terms of assembly, homotetramer and homodimer (in equilibrium). Heterodimer with EIIA-Glc. Binds 1 zinc ion per glycerol kinase EIIA-Glc dimer. The zinc ion is important for dimerization.

It catalyses the reaction glycerol + ATP = sn-glycerol 3-phosphate + ADP + H(+). The protein operates within polyol metabolism; glycerol degradation via glycerol kinase pathway; sn-glycerol 3-phosphate from glycerol: step 1/1. Its activity is regulated as follows. Activity of this regulatory enzyme is affected by several metabolites. Allosterically and non-competitively inhibited by fructose 1,6-bisphosphate (FBP) and unphosphorylated phosphocarrier protein EIIA-Glc (III-Glc), an integral component of the bacterial phosphotransferase (PTS) system. Functionally, key enzyme in the regulation of glycerol uptake and metabolism. Catalyzes the phosphorylation of glycerol to yield sn-glycerol 3-phosphate. In Escherichia coli O81 (strain ED1a), this protein is Glycerol kinase.